The sequence spans 633 residues: Chaperone protein HtpG (633 aa).

Residues 1–341 (MTAPHETMSF…SADLPLNVSR (341 aa)) are a; substrate-binding. Residues 342 to 562 (ELLQESRDVK…EGDMSGYLQR (221 aa)) are b. Residues 563-633 (LLKQAGQKAP…YVQRVNKLLA (71 aa)) form a c region.

It belongs to the heat shock protein 90 family. Homodimer.

It is found in the cytoplasm. In terms of biological role, molecular chaperone. Has ATPase activity. The polypeptide is Chaperone protein HtpG (Cupriavidus taiwanensis (strain DSM 17343 / BCRC 17206 / CCUG 44338 / CIP 107171 / LMG 19424 / R1) (Ralstonia taiwanensis (strain LMG 19424))).